A 243-amino-acid chain; its full sequence is DUF724 domain-containing protein 5 (243 aa).

The span at 1-24 (MREKHYSEDNSRKRKRGELEHNSD) shows a compositional bias: basic and acidic residues. The disordered stretch occupies residues 1-51 (MREKHYSEDNSRKRKRGELEHNSDLNETVLPSDWTPDPVKNFAADDDDEET). The DUF724 domain occupies 59-243 (VLPFVKKSPV…DLGVELEDVE (185 aa)). A coiled-coil region spans residues 174 to 223 (KEMKDESSKKHKAEQEFGEMERKILEVKNKVLELQKQEAALEKQKDATYE).

In terms of assembly, homodimer. As to expression, expressed in leaves, flowers and siliques.

It is found in the nucleus. In terms of biological role, may be involved in the polar growth of plant cells via transportation of RNAs. The chain is DUF724 domain-containing protein 5 from Arabidopsis thaliana (Mouse-ear cress).